The sequence spans 424 residues: Serine--tRNA ligase (424 aa).

An L-serine-binding site is contributed by Thr-231–Glu-233. Arg-262 to Glu-264 serves as a coordination point for ATP. L-serine is bound at residue Glu-285. Glu-349–Ser-352 contacts ATP. Residue Ser-385 participates in L-serine binding.

It belongs to the class-II aminoacyl-tRNA synthetase family. Type-1 seryl-tRNA synthetase subfamily. As to quaternary structure, homodimer. The tRNA molecule binds across the dimer.

It is found in the cytoplasm. It carries out the reaction tRNA(Ser) + L-serine + ATP = L-seryl-tRNA(Ser) + AMP + diphosphate + H(+). The catalysed reaction is tRNA(Sec) + L-serine + ATP = L-seryl-tRNA(Sec) + AMP + diphosphate + H(+). It functions in the pathway aminoacyl-tRNA biosynthesis; selenocysteinyl-tRNA(Sec) biosynthesis; L-seryl-tRNA(Sec) from L-serine and tRNA(Sec): step 1/1. In terms of biological role, catalyzes the attachment of serine to tRNA(Ser). Is also able to aminoacylate tRNA(Sec) with serine, to form the misacylated tRNA L-seryl-tRNA(Sec), which will be further converted into selenocysteinyl-tRNA(Sec). The polypeptide is Serine--tRNA ligase (Bacillus cereus (strain G9842)).